A 239-amino-acid chain; its full sequence is Ribosomal RNA small subunit methyltransferase G (239 aa).

S-adenosyl-L-methionine is bound by residues Gly80, Phe85, 103-105 (EAS), 131-132 (AE), and Arg150.

This sequence belongs to the methyltransferase superfamily. RNA methyltransferase RsmG family.

It localises to the cytoplasm. Specifically methylates the N7 position of a guanine in 16S rRNA. This is Ribosomal RNA small subunit methyltransferase G from Caldanaerobacter subterraneus subsp. tengcongensis (strain DSM 15242 / JCM 11007 / NBRC 100824 / MB4) (Thermoanaerobacter tengcongensis).